The chain runs to 179 residues: Fucolectin-4 (179 aa).

An N-terminal signal peptide occupies residues 1-23 (MEVKTIMLLFQILAISTLKQGSA). The segment at 31–179 (EENVALRGRA…VEVNALLPVN (149 aa)) is F5/8 type C-like. Ca(2+) contacts are provided by N58, D61, N63, and S72. Cystine bridges form between C73–C168, C104–C105, and C130–C146. Alpha-L-fucose-binding residues include H75 and R101. The short motif at 101-103 (RGD) is the Cell attachment site element. R108 is an alpha-L-fucose binding site. 2 residues coordinate Ca(2+): C168 and E169.

Belongs to the fucolectin family. As to quaternary structure, homotrimer. In terms of tissue distribution, gill mucous cells.

Its subcellular location is the secreted. In terms of biological role, acts as a defensive agent. Recognizes blood group fucosylated oligosaccharides including A, B, H and Lewis B-type antigens. Does not recognize Lewis A antigen and has low affinity for monovalent haptens. This Anguilla japonica (Japanese eel) protein is Fucolectin-4.